Here is a 332-residue protein sequence, read N- to C-terminus: Methylthioribose-1-phosphate isomerase (332 aa).

Residues 44–46 (RGA), arginine 87, and glutamine 192 contribute to the substrate site. Catalysis depends on aspartate 233, which acts as the Proton donor. 243–244 (NK) contacts substrate.

This sequence belongs to the eIF-2B alpha/beta/delta subunits family. MtnA subfamily.

The catalysed reaction is 5-(methylsulfanyl)-alpha-D-ribose 1-phosphate = 5-(methylsulfanyl)-D-ribulose 1-phosphate. It participates in amino-acid biosynthesis; L-methionine biosynthesis via salvage pathway; L-methionine from S-methyl-5-thio-alpha-D-ribose 1-phosphate: step 1/6. Functionally, catalyzes the interconversion of methylthioribose-1-phosphate (MTR-1-P) into methylthioribulose-1-phosphate (MTRu-1-P). The protein is Methylthioribose-1-phosphate isomerase of Dehalococcoides mccartyi (strain ATCC BAA-2100 / JCM 16839 / KCTC 5957 / BAV1).